We begin with the raw amino-acid sequence, 364 residues long: Heavy metal-associated isoprenylated plant protein 35 (364 aa).

A compositionally biased stretch (basic and acidic residues) spans Met1–Lys12. A disordered region spans residues Met1–Pro33. The HMA domain occupies Tyr39–Glu102. A metal cation-binding residues include Cys50 and Cys53. Positions Ala101 to Pro265 are disordered. Residues Val111–Glu122 show a composition bias toward basic and acidic residues. Residues Gln134–Ile144 show a composition bias toward polar residues. Composition is skewed to basic and acidic residues over residues Glu154–Leu169 and Val180–Ser198. The span at Ser237–Ser253 shows a compositional bias: polar residues. The residue at position 361 (Cys361) is a Cysteine methyl ester. Cys361 is lipidated: S-farnesyl cysteine. Residues Ala362–Met364 constitute a propeptide, removed in mature form.

Belongs to the HIPP family.

In terms of biological role, heavy-metal-binding protein. In Arabidopsis thaliana (Mouse-ear cress), this protein is Heavy metal-associated isoprenylated plant protein 35.